The chain runs to 404 residues: Serine/threonine-protein kinase UCN (404 aa).

The region spanning 22 to 340 is the Protein kinase domain; sequence LKVLKLLGKG…AAEIKEHAFF (319 aa). Residues 28-36 and K55 each bind ATP; that span reads LGKGATGTV. The active-site Proton acceptor is the D153. Residues 185-207 form a disordered region; that stretch reads EFYHLSDPEPDPNPESNLSHNKK. The AGC-kinase C-terminal domain maps to 341–404; the sequence is KGVRWELLTE…CSENNPFVDF (64 aa).

This sequence belongs to the protein kinase superfamily. AGC Ser/Thr protein kinase family. Expressed in the epidermis and cortex of the transition zone of the root apex and developing flowers. Expressed in rosette leaves, stems and siliques.

It localises to the cytoplasm. The protein localises to the nucleus. The catalysed reaction is L-seryl-[protein] + ATP = O-phospho-L-seryl-[protein] + ADP + H(+). It catalyses the reaction L-threonyl-[protein] + ATP = O-phospho-L-threonyl-[protein] + ADP + H(+). In terms of biological role, regulates planar ovule integument development by suppressing aberrantly oriented growth. Maintains planar growth of integuments by repressing the developmental regulator and transcription factor KAN4 which is involved in the control of early integument growth and polarity. Restricts growth in stamen filaments, petals, and cotyledons. The sequence is that of Serine/threonine-protein kinase UCN from Arabidopsis thaliana (Mouse-ear cress).